The sequence spans 418 residues: Serine hydroxymethyltransferase (418 aa).

Residues L121 and 125–127 contribute to the (6S)-5,6,7,8-tetrahydrofolate site; that span reads GHL. K230 carries the post-translational modification N6-(pyridoxal phosphate)lysine. 355-357 is a (6S)-5,6,7,8-tetrahydrofolate binding site; that stretch reads SPF.

It belongs to the SHMT family. Homodimer. Pyridoxal 5'-phosphate serves as cofactor.

The protein localises to the cytoplasm. It carries out the reaction (6R)-5,10-methylene-5,6,7,8-tetrahydrofolate + glycine + H2O = (6S)-5,6,7,8-tetrahydrofolate + L-serine. It participates in one-carbon metabolism; tetrahydrofolate interconversion. The protein operates within amino-acid biosynthesis; glycine biosynthesis; glycine from L-serine: step 1/1. Its function is as follows. Catalyzes the reversible interconversion of serine and glycine with tetrahydrofolate (THF) serving as the one-carbon carrier. This reaction serves as the major source of one-carbon groups required for the biosynthesis of purines, thymidylate, methionine, and other important biomolecules. Also exhibits THF-independent aldolase activity toward beta-hydroxyamino acids, producing glycine and aldehydes, via a retro-aldol mechanism. The protein is Serine hydroxymethyltransferase of Streptococcus pyogenes serotype M6 (strain ATCC BAA-946 / MGAS10394).